We begin with the raw amino-acid sequence, 217 residues long: Imidazole glycerol phosphate synthase subunit HisH (217 aa).

Positions 5 to 217 constitute a Glutamine amidotransferase type-1 domain; that stretch reads RVGIINYGVG…LRLLANFLTL (213 aa). Catalysis depends on Cys93, which acts as the Nucleophile. Catalysis depends on residues His199 and Glu201.

As to quaternary structure, heterodimer of HisH and HisF.

It localises to the cytoplasm. It catalyses the reaction 5-[(5-phospho-1-deoxy-D-ribulos-1-ylimino)methylamino]-1-(5-phospho-beta-D-ribosyl)imidazole-4-carboxamide + L-glutamine = D-erythro-1-(imidazol-4-yl)glycerol 3-phosphate + 5-amino-1-(5-phospho-beta-D-ribosyl)imidazole-4-carboxamide + L-glutamate + H(+). It carries out the reaction L-glutamine + H2O = L-glutamate + NH4(+). The protein operates within amino-acid biosynthesis; L-histidine biosynthesis; L-histidine from 5-phospho-alpha-D-ribose 1-diphosphate: step 5/9. IGPS catalyzes the conversion of PRFAR and glutamine to IGP, AICAR and glutamate. The HisH subunit catalyzes the hydrolysis of glutamine to glutamate and ammonia as part of the synthesis of IGP and AICAR. The resulting ammonia molecule is channeled to the active site of HisF. This is Imidazole glycerol phosphate synthase subunit HisH from Helicobacter hepaticus (strain ATCC 51449 / 3B1).